Reading from the N-terminus, the 205-residue chain is H/ACA ribonucleoprotein complex subunit GAR1 (205 aa).

Over residues 1–23 the composition is skewed to gly residues; it reads MSFRGGNRGGRGGFRGGFRGGRT. The segment at 1–31 is disordered; the sequence is MSFRGGNRGGRGGFRGGFRGGRTGSARSFQQ. Asymmetric dimethylarginine; by HMT1 is present on Arg4. An RGG-box 1 region spans residues 4–21; that stretch reads RGGNRGGRGGFRGGFRGG. Arg8 is modified (asymmetric dimethylarginine; by HMT1; alternate). Arg8 carries the omega-N-methylarginine; by HMT1; alternate modification. Arg11 is modified (asymmetric dimethylarginine; by HMT1). Arg15 is subject to Asymmetric dimethylarginine; by HMT1; alternate. Residue Arg15 is modified to Omega-N-methylarginine; by HMT1; alternate. At Arg19 the chain carries Asymmetric dimethylarginine; by HMT1. A Glycyl lysine isopeptide (Lys-Gly) (interchain with G-Cter in ubiquitin) cross-link involves residue Lys77. The interval 124 to 205 is disordered; sequence PKPKVVGPPK…SRGGFRGGRR (82 aa). Gly residues predominate over residues 143–205; that stretch reads APGGRGGASM…SRGGFRGGRR (63 aa). An asymmetric dimethylarginine; by HMT1; alternate mark is found at Arg147, Arg154, and Arg158. Omega-N-methylarginine; by HMT1; alternate is present on residues Arg147, Arg154, and Arg158. An RGG-box 2 region spans residues 147–205; the sequence is RGGASMGRGGSRGGFRGGRGGSSFRGGRGGSSFRGGSRGGSFRGGSRGGSRGGFRGGRR. Residue Arg162 is modified to Asymmetric dimethylarginine; by HMT1. Arg165 is subject to Asymmetric dimethylarginine; by HMT1; alternate. At Arg165 the chain carries Omega-N-methylarginine; by HMT1; alternate. Arg171 and Arg174 each carry asymmetric dimethylarginine; by HMT1. An omega-N-methylarginine; by HMT1 mark is found at Arg180 and Arg184. Arg189 bears the Asymmetric dimethylarginine; by HMT1; alternate mark. An Omega-N-methylarginine; by HMT1; alternate modification is found at Arg189. An asymmetric dimethylarginine; by HMT1 mark is found at Arg193, Arg197, and Arg201.

The protein belongs to the GAR1 family. As to quaternary structure, component of the small nucleolar ribonucleoprotein particles containing H/ACA-type snoRNAs (H/ACA snoRNPs). The protein component of the H/ACA snoRNP contains CBF5, GAR1, NHP2 and NOP10. The complex contains a stable core composed of CBF5 and NOP10, to which GAR1 and NHP2 subsequently bind. Interacts with snoRNAs. Methylated by HMT1, forming asymmetric dimethylarginines (DMA) within a domain referred to as an RGG box, made up of repeated Gly-Gly dipeptides interspersed with Arg and aromatic residues.

The protein resides in the nucleus. Its subcellular location is the nucleolus. In terms of biological role, non-catalytic component of the H/ACA small nucleolar ribonucleoprotein (H/ACA snoRNP), which catalyzes pseudouridylation of rRNA and is required for ribosome biogenesis. This involves the isomerization of uridine such that the ribose is subsequently attached to C5, instead of the normal N1. Pseudouridine ('psi') residues may serve to stabilize the conformation of rRNAs. The H/ACA snoRNP complex also mediates pseudouridylation of other types of RNAs. The H/ACA snoRNP complex mediates pseudouridylation at position 93 in U2 snRNA. Essential for growth. The chain is H/ACA ribonucleoprotein complex subunit GAR1 from Saccharomyces cerevisiae (strain ATCC 204508 / S288c) (Baker's yeast).